Reading from the N-terminus, the 92-residue chain is Large ribosomal subunit protein eL43 (92 aa).

Positions 39, 42, 57, and 60 each coordinate Zn(2+). The C4-type zinc finger occupies 39–60; that stretch reads CSFCGKTKMKRKAVGIWHCGSC.

The protein belongs to the eukaryotic ribosomal protein eL43 family. As to quaternary structure, component of the large ribosomal subunit.

It localises to the cytoplasm. Its function is as follows. Component of the large ribosomal subunit. The ribosome is a large ribonucleoprotein complex responsible for the synthesis of proteins in the cell. This is Large ribosomal subunit protein eL43 (RPL37A) from Gallus gallus (Chicken).